The following is a 552-amino-acid chain: Mothers against decapentaplegic homolog 4 (552 aa).

Residues M1 to Y322 form a mediates interaction with ZBTB7A region. Residues S18–D142 enclose the MH1 domain. The residue at position 37 (K37) is an N6-acetyllysine. The segment at V44–S69 is required for interaction with TSC22D1. Position 71 (C71) interacts with Zn(2+). Residue K113 forms a Glycyl lysine isopeptide (Lys-Gly) (interchain with G-Cter in SUMO2) linkage. Zn(2+) contacts are provided by C115, C127, and H132. Disordered stretches follow at residues G168–T194 and G236–Q256. 2 stretches are compositionally biased toward polar residues: residues P170 to T194 and Q245 to Q256. The SAD stretch occupies residues P275 to P320. In terms of domain architecture, MH2 spans W323 to D552. K428 and K507 each carry N6-acetyllysine. Residue K519 forms a Glycyl lysine isopeptide (Lys-Gly) (interchain with G-Cter in ubiquitin) linkage.

This sequence belongs to the dwarfin/SMAD family. As to quaternary structure, monomer; in the absence of TGF-beta activation. Heterotrimer; on TGF-beta activation. Heterotrimer composed of two molecules of a C-terminally phosphorylated R-SMAD molecule, SMAD2 or SMAD3, and one molecule of SMAD4 to form the transcriptional active SMAD2/SMAD3-SMAD4 complex. Found in a ternary complex composed of SMAD4, STK11/LKB1 and STK11IP. Found in a complex with SMAD1 and YY1. Identified in a complex that contains at least ZNF451, SMAD2, SMAD3 and SMAD4. Interacts with ATF2, COPS5, DACH1, MSG1, SKI, STK11/LKB1, STK11IP and TRIM33. Associates with ZNF423 or ZNF521 in response to BMP2 leading to activate transcription of BMP target genes. Interacts with USP9X. Interacts (via the MH1 and MH2 domains) with RBPMS. Interacts with WWTR1 (via coiled-coil domain). Interacts with CITED1 and CITED2. Interacts with PDPK1 (via PH domain). Interacts with VPS39; this interaction affects heterodimer formation with SMAD3, but not with SMAD2, and leads to inhibition of SMAD3-dependent transcription activation. Interactions with VPS39 and SMAD2 may be mutually exclusive. Interacts (via MH2 domain) with ZNF451 (via N-terminal zinc-finger domains). Interacts with ZC3H3. Interacts weakly with ZNF8. Interacts with NUP93 and IPO7; translocates SMAD4 to the nucleus through the NPC upon BMP7 stimulation resulting in activation of SMAD4 signaling. Interacts with CREB3L1, the interaction takes place upon TGFB1 induction and SMAD4 acts as a CREB3L1 coactivator to induce the expression of genes involved in the assembly of collagen extracellular matrix. Interacts with DLX1. Interacts with ZBTB7A; the interaction is direct and stimulated by TGFB1. Interacts with CREBBP; the recruitment of this transcriptional coactivator is negatively regulated by ZBTB7A. Interacts with EP300; the interaction with this transcriptional coactivator is negatively regulated by ZBTB7A. Interacts with HDAC1. Interacts (via MH2 domain) with ZMIZ1 (via SP-RING-type domain); in the TGF-beta signaling pathway increases the activity of the SMAD3/SMAD4 transcriptional complex. Interacts (via N-terminus) with TSC22D1. Post-translationally, phosphorylated by PDPK1. In terms of processing, monoubiquitinated on Lys-519 by E3 ubiquitin-protein ligase TRIM33. Monoubiquitination hampers its ability to form a stable complex with activated SMAD2/3 resulting in inhibition of TGF-beta/BMP signaling cascade. Deubiquitination by USP9X restores its competence to mediate TGF-beta signaling.

It localises to the cytoplasm. The protein localises to the nucleus. In muscle physiology, plays a central role in the balance between atrophy and hypertrophy. When recruited by MSTN, promotes atrophy response via phosphorylated SMAD2/4. MSTN decrease causes SMAD4 release and subsequent recruitment by the BMP pathway to promote hypertrophy via phosphorylated SMAD1/5/8. Acts synergistically with SMAD1 and YY1 in bone morphogenetic protein (BMP)-mediated cardiac-specific gene expression. Binds to SMAD binding elements (SBEs) (5'-GTCT/AGAC-3') within BMP response element (BMPRE) of cardiac activating regions. Common SMAD (co-SMAD) is the coactivator and mediator of signal transduction by TGF-beta (transforming growth factor). Component of the heterotrimeric SMAD2/SMAD3-SMAD4 complex that forms in the nucleus and is required for the TGF-mediated signaling. Promotes binding of the SMAD2/SMAD4/FAST-1 complex to DNA and provides an activation function required for SMAD1 or SMAD2 to stimulate transcription. Component of the multimeric SMAD3/SMAD4/JUN/FOS complex which forms at the AP1 promoter site; required for synergistic transcriptional activity in response to TGF-beta. May act as a tumor suppressor. Positively regulates PDPK1 kinase activity by stimulating its dissociation from the 14-3-3 protein YWHAQ which acts as a negative regulator. This chain is Mothers against decapentaplegic homolog 4 (SMAD4), found in Homo sapiens (Human).